A 255-amino-acid polypeptide reads, in one-letter code: 1-(5-phosphoribosyl)-5-[(5-phosphoribosylamino)methylideneamino] imidazole-4-carboxamide isomerase (255 aa).

Asp8 serves as the catalytic Proton acceptor. Asp129 acts as the Proton donor in catalysis.

This sequence belongs to the HisA/HisF family.

The protein resides in the cytoplasm. The catalysed reaction is 1-(5-phospho-beta-D-ribosyl)-5-[(5-phospho-beta-D-ribosylamino)methylideneamino]imidazole-4-carboxamide = 5-[(5-phospho-1-deoxy-D-ribulos-1-ylimino)methylamino]-1-(5-phospho-beta-D-ribosyl)imidazole-4-carboxamide. The protein operates within amino-acid biosynthesis; L-histidine biosynthesis; L-histidine from 5-phospho-alpha-D-ribose 1-diphosphate: step 4/9. The sequence is that of 1-(5-phosphoribosyl)-5-[(5-phosphoribosylamino)methylideneamino] imidazole-4-carboxamide isomerase from Synechococcus sp. (strain CC9605).